Reading from the N-terminus, the 613-residue chain is Zinc finger CCCH domain-containing protein 59 (613 aa).

Residues 275–296 (NTTLSPYISPAKSVPVEETPKR) are disordered. 2 C3H1-type zinc fingers span residues 318–346 (AGGN…HDEE) and 350–378 (HYNR…HSLS).

This chain is Zinc finger CCCH domain-containing protein 59, found in Oryza sativa subsp. japonica (Rice).